We begin with the raw amino-acid sequence, 339 residues long: Ketol-acid reductoisomerase (NADP(+)) (339 aa).

One can recognise a KARI N-terminal Rossmann domain in the interval 1 to 182; sequence MRVYYDRDAD…GGGRAGVIET (182 aa). Residues 24–27, Arg48, Ser51, Thr53, and 83–86 contribute to the NADP(+) site; these read YGSQ and DELQ. The active site involves His108. Gly134 contacts NADP(+). Residues 183–328 enclose the KARI C-terminal knotted domain; sequence TFKEECETDL…EKLRAMMPWI (146 aa). Mg(2+) is bound by residues Asp191, Glu195, Glu227, and Glu231. Ser252 contacts substrate.

The protein belongs to the ketol-acid reductoisomerase family. Mg(2+) is required as a cofactor.

The catalysed reaction is (2R)-2,3-dihydroxy-3-methylbutanoate + NADP(+) = (2S)-2-acetolactate + NADPH + H(+). It catalyses the reaction (2R,3R)-2,3-dihydroxy-3-methylpentanoate + NADP(+) = (S)-2-ethyl-2-hydroxy-3-oxobutanoate + NADPH + H(+). Its pathway is amino-acid biosynthesis; L-isoleucine biosynthesis; L-isoleucine from 2-oxobutanoate: step 2/4. It participates in amino-acid biosynthesis; L-valine biosynthesis; L-valine from pyruvate: step 2/4. Its function is as follows. Involved in the biosynthesis of branched-chain amino acids (BCAA). Catalyzes an alkyl-migration followed by a ketol-acid reduction of (S)-2-acetolactate (S2AL) to yield (R)-2,3-dihydroxy-isovalerate. In the isomerase reaction, S2AL is rearranged via a Mg-dependent methyl migration to produce 3-hydroxy-3-methyl-2-ketobutyrate (HMKB). In the reductase reaction, this 2-ketoacid undergoes a metal-dependent reduction by NADPH to yield (R)-2,3-dihydroxy-isovalerate. This Xanthobacter autotrophicus (strain ATCC BAA-1158 / Py2) protein is Ketol-acid reductoisomerase (NADP(+)).